Here is a 587-residue protein sequence, read N- to C-terminus: Methylcrotonoyl-CoA carboxylase beta chain, mitochondrial (587 aa).

A mitochondrion-targeting transit peptide spans 1-26 (MLRILGRRVVSASKELTSIQQWRIRP). Residues 68–324 (MEGILSELRS…AAKQGMEGTF (257 aa)) form the CoA carboxyltransferase N-terminal domain. The tract at residues 68-579 (MEGILSELRS…SAALNRPLED (512 aa)) is carboxyltransferase. In terms of domain architecture, CoA carboxyltransferase C-terminal spans 333-579 (EPLYDINELR…SAALNRPLED (247 aa)). The tract at residues 367-396 (EFDEFKKQYGTTLVTGFARIYGQTVGIIGN) is acyl-CoA binding.

This sequence belongs to the AccD/PCCB family. Probably a heterodimer composed of biotin-containing alpha subunits and beta subunits. As to expression, in roots, cotyledons, leaves, flowers, ovaries, siliques and embryos.

The protein localises to the mitochondrion matrix. The catalysed reaction is 3-methylbut-2-enoyl-CoA + hydrogencarbonate + ATP = 3-methyl-(2E)-glutaconyl-CoA + ADP + phosphate + H(+). It participates in amino-acid degradation; L-leucine degradation; (S)-3-hydroxy-3-methylglutaryl-CoA from 3-isovaleryl-CoA: step 2/3. Carboxyltransferase subunit of the 3-methylcrotonyl-CoA carboxylase, an enzyme that catalyzes the conversion of 3-methylcrotonyl-CoA to 3-methylglutaconyl-CoA, a critical step for leucine and isovaleric acid catabolism. This chain is Methylcrotonoyl-CoA carboxylase beta chain, mitochondrial (MCCB), found in Arabidopsis thaliana (Mouse-ear cress).